Reading from the N-terminus, the 358-residue chain is MSKKCVVVAGGTGGHIFPGIAVADYLKQQGWQVSWIGTPDRMEATVVPKHNIDINFINVKGVRGNGIKRLIKAPFMVLNAILQARKVLKSEKPDVVLAMGGYVTGPTGIAAKSLGIPLVIHEQNAIAGMSNKWLAKFANRVLAAFPSAFATGQAELVGNPVRESVANIAVREVSSPINILVVGGSLGAQVLNTTLPAAFAELGNTNAISVWHQTGKGHLGSVEAAYKSHKFSTENTKVAEFIDDIDTAYGWADIVICRSGALTVSEIATAGKMAVFVPFPHAVDDHQTANAQYLVVANGALLMPQGQFNQQSIVALLSPYLAKPSLIKEMAANAKQQAILDATASVAMHCEQVTNKRA.

Residues Thr12–Gly14, Asn124, Arg162, Ser185, Ile242, Ala261–Glu266, and Gln287 each bind UDP-N-acetyl-alpha-D-glucosamine.

Belongs to the glycosyltransferase 28 family. MurG subfamily.

Its subcellular location is the cell inner membrane. It carries out the reaction di-trans,octa-cis-undecaprenyl diphospho-N-acetyl-alpha-D-muramoyl-L-alanyl-D-glutamyl-meso-2,6-diaminopimeloyl-D-alanyl-D-alanine + UDP-N-acetyl-alpha-D-glucosamine = di-trans,octa-cis-undecaprenyl diphospho-[N-acetyl-alpha-D-glucosaminyl-(1-&gt;4)]-N-acetyl-alpha-D-muramoyl-L-alanyl-D-glutamyl-meso-2,6-diaminopimeloyl-D-alanyl-D-alanine + UDP + H(+). Its pathway is cell wall biogenesis; peptidoglycan biosynthesis. Functionally, cell wall formation. Catalyzes the transfer of a GlcNAc subunit on undecaprenyl-pyrophosphoryl-MurNAc-pentapeptide (lipid intermediate I) to form undecaprenyl-pyrophosphoryl-MurNAc-(pentapeptide)GlcNAc (lipid intermediate II). The chain is UDP-N-acetylglucosamine--N-acetylmuramyl-(pentapeptide) pyrophosphoryl-undecaprenol N-acetylglucosamine transferase from Pseudoalteromonas translucida (strain TAC 125).